The following is a 301-amino-acid chain: tRNA pseudouridine synthase B (301 aa).

The active-site Nucleophile is aspartate 45.

This sequence belongs to the pseudouridine synthase TruB family. Type 1 subfamily.

It carries out the reaction uridine(55) in tRNA = pseudouridine(55) in tRNA. Responsible for synthesis of pseudouridine from uracil-55 in the psi GC loop of transfer RNAs. The polypeptide is tRNA pseudouridine synthase B (Streptomyces avermitilis (strain ATCC 31267 / DSM 46492 / JCM 5070 / NBRC 14893 / NCIMB 12804 / NRRL 8165 / MA-4680)).